The following is a 302-amino-acid chain: DDRGK domain-containing protein 1 (302 aa).

Residues 1-5 (MDGGG) lie on the Lumenal side of the membrane. The chain crosses the membrane as a helical span at residues 6 to 26 (GMLGAVVCLLLVFAIFPLLLW). The Cytoplasmic portion of the chain corresponds to 27–302 (RRRSDAAHRL…DENAAAGTEL (276 aa)). Disordered stretches follow at residues 36 to 151 (LPPQ…EEAR) and 279 to 302 (DLEPKPQYNEESNLDENAAAGTEL). Residues 79–91 (VDDADSDLEEEIQ) are compositionally biased toward acidic residues. Basic and acidic residues predominate over residues 103–151 (KRQDREAQRQAEEAARDSRRTKQDRYAEMRRKKDEEREAQERLMEEEAR).

The protein belongs to the DDRGK1 family.

It is found in the endoplasmic reticulum membrane. Its function is as follows. Substrate adapter for ufmylation, the covalent attachment of the ubiquitin-like modifier UFM1 to substrate proteins. The protein is DDRGK domain-containing protein 1 of Oryza sativa subsp. japonica (Rice).